The following is a 931-amino-acid chain: Bifunctional glutamine synthetase adenylyltransferase/adenylyl-removing enzyme (931 aa).

Residues Met1 to Pro434 form an adenylyl removase region. The segment at Pro441–Ala931 is adenylyl transferase.

The protein belongs to the GlnE family. It depends on Mg(2+) as a cofactor.

The catalysed reaction is [glutamine synthetase]-O(4)-(5'-adenylyl)-L-tyrosine + phosphate = [glutamine synthetase]-L-tyrosine + ADP. The enzyme catalyses [glutamine synthetase]-L-tyrosine + ATP = [glutamine synthetase]-O(4)-(5'-adenylyl)-L-tyrosine + diphosphate. Involved in the regulation of glutamine synthetase GlnA, a key enzyme in the process to assimilate ammonia. When cellular nitrogen levels are high, the C-terminal adenylyl transferase (AT) inactivates GlnA by covalent transfer of an adenylyl group from ATP to specific tyrosine residue of GlnA, thus reducing its activity. Conversely, when nitrogen levels are low, the N-terminal adenylyl removase (AR) activates GlnA by removing the adenylyl group by phosphorolysis, increasing its activity. The regulatory region of GlnE binds the signal transduction protein PII (GlnB) which indicates the nitrogen status of the cell. This chain is Bifunctional glutamine synthetase adenylyltransferase/adenylyl-removing enzyme, found in Stenotrophomonas maltophilia (strain K279a).